The sequence spans 218 residues: tRNA (guanine-N(7)-)-methyltransferase (218 aa).

Positions 1–26 (MRLKNKPWANELVEEHPESALDRPDP) are disordered. Over residues 13 to 26 (VEEHPESALDRPDP) the composition is skewed to basic and acidic residues. Positions 45, 70, 97, and 119 each coordinate S-adenosyl-L-methionine. Asp119 is an active-site residue. Position 123 (Lys123) interacts with substrate. The interval 125–130 (RHEKRR) is interaction with RNA. Substrate is bound by residues Asp155 and 195-198 (TEYE).

Belongs to the class I-like SAM-binding methyltransferase superfamily. TrmB family.

The catalysed reaction is guanosine(46) in tRNA + S-adenosyl-L-methionine = N(7)-methylguanosine(46) in tRNA + S-adenosyl-L-homocysteine. The protein operates within tRNA modification; N(7)-methylguanine-tRNA biosynthesis. Catalyzes the formation of N(7)-methylguanine at position 46 (m7G46) in tRNA. This Lactobacillus delbrueckii subsp. bulgaricus (strain ATCC 11842 / DSM 20081 / BCRC 10696 / JCM 1002 / NBRC 13953 / NCIMB 11778 / NCTC 12712 / WDCM 00102 / Lb 14) protein is tRNA (guanine-N(7)-)-methyltransferase.